The sequence spans 585 residues: Phosphomethylpyrimidine synthase (585 aa).

Over residues 89–107 (RGDTESYEGRHVKPEDNGY) the composition is skewed to basic and acidic residues. Residues 89–116 (RGDTESYEGRHVKPEDNGYRSRNGSHQH) are disordered. Residues asparagine 199, methionine 228, tyrosine 257, histidine 293, 313–315 (SRG), 354–357 (DGLR), and glutamate 393 each bind substrate. Histidine 397 is a binding site for Zn(2+). Tyrosine 420 serves as a coordination point for substrate. Histidine 461 contributes to the Zn(2+) binding site. [4Fe-4S] cluster-binding residues include cysteine 541, cysteine 544, and cysteine 549.

This sequence belongs to the ThiC family. Requires [4Fe-4S] cluster as cofactor.

The catalysed reaction is 5-amino-1-(5-phospho-beta-D-ribosyl)imidazole + S-adenosyl-L-methionine = 4-amino-2-methyl-5-(phosphooxymethyl)pyrimidine + CO + 5'-deoxyadenosine + formate + L-methionine + 3 H(+). It participates in cofactor biosynthesis; thiamine diphosphate biosynthesis. In terms of biological role, catalyzes the synthesis of the hydroxymethylpyrimidine phosphate (HMP-P) moiety of thiamine from aminoimidazole ribotide (AIR) in a radical S-adenosyl-L-methionine (SAM)-dependent reaction. This is Phosphomethylpyrimidine synthase from Bacillus pumilus (strain SAFR-032).